A 416-amino-acid polypeptide reads, in one-letter code: N-carbamoyl-L-amino-acid amidohydrolase (416 aa).

His87, Asp98, Glu133, and His194 together coordinate a divalent metal cation. An N-carbamoyl-L-alpha-amino acid-binding residues include Gln197, His230, Asn279, Arg292, and Gly361. The involved in dimerization stretch occupies residues 213–331; it reads HCQGLWWLEF…SIEAVGHFDP (119 aa). A divalent metal cation is bound at residue His386.

Belongs to the peptidase M20 family. In terms of assembly, homodimer. Mn(2+) is required as a cofactor. It depends on Ni(2+) as a cofactor. Co(2+) serves as cofactor. The cofactor is Fe(2+).

The catalysed reaction is an N-carbamoyl-L-alpha-amino acid + H2O + 2 H(+) = an L-alpha-amino acid + NH4(+) + CO2. The enzyme catalyses N-carbamoyl-L-methionine + H2O + 2 H(+) = L-methionine + NH4(+) + CO2. It catalyses the reaction N-acetyl-L-methionine + H2O = L-methionine + acetate. It carries out the reaction N(alpha)-formyl-L-methionine + H2O = formate + L-methionine. The catalysed reaction is N-carbamoyl-L-alanine + H2O + 2 H(+) = L-alanine + NH4(+) + CO2. The enzyme catalyses N-carbamoyl-L-cysteine + H2O + 2 H(+) = L-cysteine + NH4(+) + CO2. It catalyses the reaction N-carbamoyl-L-tryptophan + H2O + 2 H(+) = L-tryptophan + NH4(+) + CO2. It carries out the reaction N-carbamoyl-L-valine + H2O + 2 H(+) = L-valine + NH4(+) + CO2. The catalysed reaction is N-carbamoyl-L-phenylalanine + H2O + 2 H(+) = L-phenylalanine + NH4(+) + CO2. Strongly inhibited by Hg(2+), Cu(2+), Zn(2+), Pb(2+) and Fe(3+) ions, and slightly inhibited by Na(+) and K(+) ions. Beta-mercaptoethanol and 5,5'-dithiobis-(2-nitrobenzoic acid)(DTNB) cause 34% and 42% inhibition, respectively. Its function is as follows. Catalyzes the hydrolysis of both aliphatic and aromatic N-carbamoyl-L-alpha-amino acids to free L-alpha-amino acids. Is strictly L-specific since it is inactive toward N-carbamoyl-D-alpha-amino acids. Is also able to hydrolyze N-formyl-L-methionine and N-acetyl-L-methionine, but not ureidosuccinate or 3-ureidopropanoate. The protein is N-carbamoyl-L-amino-acid amidohydrolase of Rhizobium meliloti (Ensifer meliloti).